Reading from the N-terminus, the 248-residue chain is Inhibitor of growth protein 4 (248 aa).

Residues 25–118 are a coiled coil; the sequence is FQLMRDLDQR…ADLKEKQIES (94 aa). N6-acetyllysine is present on residues lysine 112, lysine 127, and lysine 129. Positions 115–160 are disordered; that stretch reads QIESSDYDSSSSKGKKSRTQKEKKAARARSKGKNSDEEAPKAAQKK. Residues 127-147 carry the Bipartite nuclear localization signal motif; that stretch reads KGKKSRTQKEKKAARARSKGK. Residue arginine 132 is modified to Citrulline. N6-acetyllysine occurs at positions 145, 147, and 155. Arginine 165 is subject to Citrulline. The PHD-type zinc finger occupies 195 to 244; sequence PTYCLCHQVSYGEMIGCDNPDCSIERFHFACVGLTTKPRGKWFCPRCSQE. Zn(2+) contacts are provided by cysteine 198, cysteine 200, cysteine 211, cysteine 216, histidine 222, cysteine 225, cysteine 238, and cysteine 241.

It belongs to the ING family. Homodimer. Component of the HBO1 complex composed of KAT7/HBO1, MEAF6, ING4 or ING5, and one scaffold subunit: complexes containing BRPF scaffold (BRPF1, BRD1/BRPF2 or BRPF3) direct KAT7/HBO1 specificity towards H3K14ac, while complexes containing JADE scaffold (JADE1, JADE2 and JADE3) mediate acetylation of histone H4. Interacts with H3K4me3 and to a lesser extent with H3K4me2, the interaction augments KAT7/HBO1 acetylation activity on H3 tails. Interacts with EP300, RELA and TP53; these interactions may be indirect. Interacts with EGLN1. Interacts with BCL2A1. Post-translationally, citrullination by PADI4 within the nuclear localization signal disrupts the interaction with p53 and increases susceptibility to degradation.

The protein localises to the nucleus. Its function is as follows. Component of HBO1 complexes, which specifically mediate acetylation of histone H3 at 'Lys-14' (H3K14ac), and have reduced activity toward histone H4. Through chromatin acetylation it may function in DNA replication. May inhibit tumor progression by modulating the transcriptional output of signaling pathways which regulate cell proliferation. Can suppress brain tumor angiogenesis through transcriptional repression of RELA/NFKB3 target genes when complexed with RELA. May also specifically suppress loss of contact inhibition elicited by activated oncogenes such as MYC. Represses hypoxia inducible factor's (HIF) activity by interacting with HIF prolyl hydroxylase 2 (EGLN1). Can enhance apoptosis induced by serum starvation in mammary epithelial cell line HC11. The chain is Inhibitor of growth protein 4 (ING4) from Bos taurus (Bovine).